A 411-amino-acid polypeptide reads, in one-letter code: ATP phosphoribosyltransferase 1, chloroplastic (411 aa).

Over residues 1-12 the composition is skewed to polar residues; that stretch reads MSLLLPTNLQQY. The segment at 1-27 is disordered; that stretch reads MSLLLPTNLQQYPSSSSFPSSTPILSP. The transit peptide at 1-49 directs the protein to the chloroplast; the sequence is MSLLLPTNLQQYPSSSSFPSSTPILSPPPSTAFSVIVPRRRCLRLVTSC. Over residues 13–24 the composition is skewed to low complexity; that stretch reads PSSSSFPSSTPI. An N-acetylvaline modification is found at Val-50.

Belongs to the ATP phosphoribosyltransferase family. Long subfamily. Requires Mg(2+) as cofactor. As to expression, expressed in leaves and at lower levels in roots (at protein level).

It is found in the plastid. The protein resides in the chloroplast. It carries out the reaction 1-(5-phospho-beta-D-ribosyl)-ATP + diphosphate = 5-phospho-alpha-D-ribose 1-diphosphate + ATP. It functions in the pathway amino-acid biosynthesis; L-histidine biosynthesis; L-histidine from 5-phospho-alpha-D-ribose 1-diphosphate: step 1/9. Feedback inhibited by L-histidine. In terms of biological role, catalyzes the condensation of ATP and 5-phosphoribose 1-diphosphate to form N'-(5'-phosphoribosyl)-ATP (PR-ATP). This is ATP phosphoribosyltransferase 1, chloroplastic (HISN1A) from Arabidopsis thaliana (Mouse-ear cress).